The chain runs to 828 residues: Periplasmic nitrate reductase (828 aa).

The segment at residues 1–31 (MKLSRRSFMKANAVAAAAAAAGLSVPGVARA) is a signal peptide (tat-type signal). The region spanning 39–95 (IKWDKAPCRFCGTGCGVLVGTQQGRVVACQGDPDAPVNRGLNCIKGYFLPKIMYGKD) is the 4Fe-4S Mo/W bis-MGD-type domain. [4Fe-4S] cluster contacts are provided by C46, C49, C53, and C81. Mo-bis(molybdopterin guanine dinucleotide)-binding positions include K83, Q150, N175, C179, 212-219 (WGANMAEM), 243-247 (STYQH), 262-264 (QSD), M372, Q376, N482, 508-509 (SD), K531, D558, and 718-727 (TGRVLEHWHT). Substrate is bound at residue F794. 2 residues coordinate Mo-bis(molybdopterin guanine dinucleotide): N802 and K819.

It belongs to the prokaryotic molybdopterin-containing oxidoreductase family. NasA/NapA/NarB subfamily. In terms of assembly, component of the periplasmic nitrate reductase NapAB complex composed of NapA and NapB. Requires [4Fe-4S] cluster as cofactor. Mo-bis(molybdopterin guanine dinucleotide) is required as a cofactor. Predicted to be exported by the Tat system. The position of the signal peptide cleavage has not been experimentally proven.

The protein resides in the periplasm. It catalyses the reaction 2 Fe(II)-[cytochrome] + nitrate + 2 H(+) = 2 Fe(III)-[cytochrome] + nitrite + H2O. Catalytic subunit of the periplasmic nitrate reductase complex NapAB. Receives electrons from NapB and catalyzes the reduction of nitrate to nitrite. This Escherichia coli O9:H4 (strain HS) protein is Periplasmic nitrate reductase.